The chain runs to 61 residues: UPF0434 protein PFLU_3771 (61 aa).

It belongs to the UPF0434 family.

The polypeptide is UPF0434 protein PFLU_3771 (Pseudomonas fluorescens (strain SBW25)).